We begin with the raw amino-acid sequence, 399 residues long: Elongation factor Tu (399 aa).

Positions 10-209 constitute a tr-type G domain; the sequence is KPHVNIGTIG…AVDDYIPTPV (200 aa). The interval 19–26 is G1; it reads GHVDHGKT. 19–26 is a binding site for GTP; it reads GHVDHGKT. Thr-26 is a Mg(2+) binding site. The interval 62-66 is G2; the sequence is GITIN. Residues 83-86 are G3; that stretch reads DCPG. Residues 83 to 87 and 138 to 141 contribute to the GTP site; these read DCPGH and NKCD. Residues 138–141 form a G4 region; sequence NKCD. The interval 175-177 is G5; the sequence is SAY.

The protein belongs to the TRAFAC class translation factor GTPase superfamily. Classic translation factor GTPase family. EF-Tu/EF-1A subfamily. Monomer.

The protein resides in the cytoplasm. The catalysed reaction is GTP + H2O = GDP + phosphate + H(+). Its function is as follows. GTP hydrolase that promotes the GTP-dependent binding of aminoacyl-tRNA to the A-site of ribosomes during protein biosynthesis. The polypeptide is Elongation factor Tu (Bifidobacterium longum subsp. infantis (strain ATCC 15697 / DSM 20088 / JCM 1222 / NCTC 11817 / S12)).